A 521-amino-acid chain; its full sequence is Glutamyl-tRNA(Gln) amidotransferase subunit B, mitochondrial (521 aa).

The transit peptide at 1–22 directs the protein to the mitochondrion; sequence MIALLRWGIARPSAPLRWSRCF.

The protein belongs to the GatB/GatE family. GatB subfamily. In terms of assembly, subunit of the heterotrimeric GatCAB amidotransferase (AdT) complex, composed of A, B and C subunits.

It localises to the mitochondrion. The catalysed reaction is L-glutamyl-tRNA(Gln) + L-glutamine + ATP + H2O = L-glutaminyl-tRNA(Gln) + L-glutamate + ADP + phosphate + H(+). In terms of biological role, allows the formation of correctly charged Gln-tRNA(Gln) through the transamidation of misacylated Glu-tRNA(Gln) in the mitochondria. The reaction takes place in the presence of glutamine and ATP through an activated gamma-phospho-Glu-tRNA(Gln). The chain is Glutamyl-tRNA(Gln) amidotransferase subunit B, mitochondrial from Cryptococcus neoformans var. neoformans serotype D (strain JEC21 / ATCC MYA-565) (Filobasidiella neoformans).